A 105-amino-acid chain; its full sequence is Nucleoid-associated protein ABC0038 (105 aa).

Over residues 1–22 the composition is skewed to low complexity; it reads MEMKNMGNMMKQMQKMQKQMMK. The segment at 1 to 26 is disordered; it reads MEMKNMGNMMKQMQKMQKQMMKAQEE.

The protein belongs to the YbaB/EbfC family. In terms of assembly, homodimer.

The protein localises to the cytoplasm. It localises to the nucleoid. Its function is as follows. Binds to DNA and alters its conformation. May be involved in regulation of gene expression, nucleoid organization and DNA protection. This Shouchella clausii (strain KSM-K16) (Alkalihalobacillus clausii) protein is Nucleoid-associated protein ABC0038.